The primary structure comprises 375 residues: MKNKYYPLRSSMDELSTKNDNEIDLEKGPLPEYNSEDGSTLPPYSENLNLKDPKQMGQSITKLFNWNKSTTPPDYDENRLLITDEGNNPPNTHRENHSSGTTDNSSPFLIKLLISFTSIILFNAPAVCYLKYKDAFFKNYGAAEWTLIGFWCASSLIIFTFSWCFYETWTKAVKVTVIFLAQCIKVTAISLAKCVKVISIGLFNIRREMMIIIWILWLIICCILFGCVKDGRLNLNKALICSTCTISAVLFLIVSSVCIPIWTLWRALSGMLQVLGIHGIIALLVNGLMSLFGKHFGWRGYEIEGFVLFFTGNALFLYEMERPGVLKRMRNTTRNVIGFILGGIANAIGGIANAIGGANDNNDIPLGELEVESEV.

Disordered stretches follow at residues 1–42 (MKNK…STLP) and 74–103 (DYDE…GTTD). Over residues 11 to 29 (SMDELSTKNDNEIDLEKGP) the composition is skewed to basic and acidic residues. Helical transmembrane passes span 108–128 (FLIK…PAVC), 145–165 (WTLI…SWCF), 172–192 (AVKV…ISLA), 208–228 (EMMI…FGCV), 245–265 (TISA…WTLW), 272–292 (LQVL…MSLF), and 336–356 (VIGF…NAIG).

Belongs to the WTF family. Homomer. Forms protein aggregates. The two isoforms can interact with each other and with themselves. High sequence similarity is required for their interaction.

It localises to the spore membrane. The protein resides in the vacuole. Its subcellular location is the membrane. It is found in the ascus epiplasm. The protein localises to the cytoplasm. It localises to the endoplasmic reticulum. In terms of biological role, promotes unequal transmission of alleles from the parental zygote to progeny spores by acting as poison/antidote system where the poison and antidote proteins are produced from the same locus; the poison component is trans-acting and targets all spores within an ascus whereas the antidote component is spore-specific, leading to poisoning of all progeny that do not inherit the allele. Localizes isoform 2 to the vacuole thereby facilitating its degradation. Its function is as follows. Forms toxic aggregates that disrupt spore maturation. The chain is Meiotic driver cw27 from Schizosaccharomyces pombe (Fission yeast).